The following is a 589-amino-acid chain: uncharacterized protein (589 aa).

14 consecutive transmembrane segments (helical) span residues Tyr-90–Ile-110, Ser-128–Met-148, Ile-162–Val-182, Gly-189–Leu-209, Gly-217–Ile-237, Trp-245–Leu-265, Phe-284–Gly-304, Ala-311–Val-331, Val-355–Val-375, Val-390–Ile-410, Pro-419–Tyr-439, Gly-448–Val-468, Ala-483–Tyr-503, and Ile-545–Phe-565.

This sequence belongs to the major facilitator superfamily. TCR/Tet family.

The protein localises to the membrane. This is an uncharacterized protein from Schizosaccharomyces pombe (strain 972 / ATCC 24843) (Fission yeast).